Consider the following 839-residue polypeptide: RNA-directed RNA polymerase (839 aa).

The region spanning 504 to 619 (PVCVGLDASR…IMDQEHLAKF (116 aa)) is the RdRp catalytic domain.

The enzyme catalyses RNA(n) + a ribonucleoside 5'-triphosphate = RNA(n+1) + diphosphate. In terms of biological role, RNA-dependent RNA polymerase replicates the viral genome. The protein is RNA-directed RNA polymerase of Groundnut rosette virus (strain MC1) (GRV).